Here is a 156-residue protein sequence, read N- to C-terminus: Small ribosomal subunit protein uS7 (156 aa).

It belongs to the universal ribosomal protein uS7 family. As to quaternary structure, part of the 30S ribosomal subunit. Contacts proteins S9 and S11.

In terms of biological role, one of the primary rRNA binding proteins, it binds directly to 16S rRNA where it nucleates assembly of the head domain of the 30S subunit. Is located at the subunit interface close to the decoding center, probably blocks exit of the E-site tRNA. The sequence is that of Small ribosomal subunit protein uS7 from Streptococcus pyogenes serotype M12 (strain MGAS2096).